The sequence spans 474 residues: PTS system sucrose-specific EIIBC component (474 aa).

The region spanning 4–87 is the PTS EIIB type-1 domain; sequence SQIAQQVIDK…SKLLGIGDMT (84 aa). The Phosphocysteine intermediate; for EIIB activity role is filled by cysteine 26. One can recognise a PTS EIIC type-1 domain in the interval 107–474; the sequence is KGLADIFVPI…LGKRAQLKAE (368 aa). The next 10 helical transmembrane spans lie at 109–129, 158–178, 182–202, 229–249, 264–284, 303–323, 345–365, 376–396, 403–423, and 444–464; these read LADIFVPIIPAIVAGGLLMGI, FINTIANAPFVFLPVLLGFSA, FGGNPFLGAALGMLLVHPALS, VGYQGTVIPVLVASWVLATLE, ITPLFALFITGLLAFTVIGPI, LGFVGGAIFGTLYAPIVITGM, FIFPIAAMSNIAQGAACLGAA, IAVPSGISALLGITEPAMFGV, PFISAMIGAGISSAVIALFNV, and LAMYCVGMLISASIAFTLTVI.

It localises to the cell inner membrane. The enzyme catalyses N(pros)-phospho-L-histidyl-[protein](out) + sucrose = sucrose 6(G)-phosphate(in) + L-histidyl-[protein]. Its function is as follows. The phosphoenolpyruvate-dependent sugar phosphotransferase system (sugar PTS), a major carbohydrate active transport system, catalyzes the phosphorylation of incoming sugar substrates concomitantly with their translocation across the cell membrane. This system is involved in sucrose transport. The polypeptide is PTS system sucrose-specific EIIBC component (scrA) (Pasteurella multocida (strain Pm70)).